The primary structure comprises 254 residues: 5-oxoprolinase subunit A (254 aa).

This sequence belongs to the LamB/PxpA family. Forms a complex composed of PxpA, PxpB and PxpC.

It catalyses the reaction 5-oxo-L-proline + ATP + 2 H2O = L-glutamate + ADP + phosphate + H(+). Functionally, catalyzes the cleavage of 5-oxoproline to form L-glutamate coupled to the hydrolysis of ATP to ADP and inorganic phosphate. This chain is 5-oxoprolinase subunit A, found in Brevibacillus brevis (strain 47 / JCM 6285 / NBRC 100599).